We begin with the raw amino-acid sequence, 118 residues long: Non-specific lipid-transfer protein D (118 aa).

Positions 1 to 25 (MAGLMKLACLIFACMIVAGPITSNA) are cleaved as a signal peptide. Cystine bridges form between Cys-29–Cys-77, Cys-39–Cys-54, Cys-55–Cys-100, and Cys-75–Cys-114.

Belongs to the plant LTP family.

Plant non-specific lipid-transfer proteins transfer phospholipids as well as galactolipids across membranes. May play a role in wax or cutin deposition in the cell walls of expanding epidermal cells and certain secretory tissues. The chain is Non-specific lipid-transfer protein D (WAX9D) from Brassica oleracea var. italica (Broccoli).